The chain runs to 169 residues: Peptide methionine sulfoxide reductase MsrA (169 aa).

Cys-10 is an active-site residue.

Belongs to the MsrA Met sulfoxide reductase family.

The catalysed reaction is L-methionyl-[protein] + [thioredoxin]-disulfide + H2O = L-methionyl-(S)-S-oxide-[protein] + [thioredoxin]-dithiol. The enzyme catalyses [thioredoxin]-disulfide + L-methionine + H2O = L-methionine (S)-S-oxide + [thioredoxin]-dithiol. Its function is as follows. Has an important function as a repair enzyme for proteins that have been inactivated by oxidation. Catalyzes the reversible oxidation-reduction of methionine sulfoxide in proteins to methionine. The chain is Peptide methionine sulfoxide reductase MsrA from Streptococcus mutans serotype c (strain ATCC 700610 / UA159).